We begin with the raw amino-acid sequence, 532 residues long: MGAAASRRRALRSEAMSSVAAKVRAARAFGEYLSQSHPENRNGADHLLADAYSGHDGSPEMQPAPQNKRRLSLVSNGRYEGSISDEAVSGKPAIEGPQPHVYTISREPALLPGSEAEAIELAVVKGRRQRERHPHHHSQPLRASPGSSREDISRPCQSWAGSRQGSKECPGCAQLVPGPSSRAFGLEQPPLPEAPGRHKKLERMYSVDGVSDDVPIRTWFPKENLFSFQTATTTMQAISVFRGYAERKRRKRENDSASVIQRNFRKHLRMVGSRRVKAQTFAERRERSFSRSWSDPTPMKADTSHDSRDSSDLQSSHCTLDEACEDLDWDTEKGLEAMACNTEGFLPPKVMLISSKVPKAEYIPTIIRRDDPSIIPILYDHEHATFEDILEEIEKKLNIYHKGAKIWKMLIFCQGGPGHLYLLKNKVATFAKVEKEEDMIHFWKRLSRLMSKVNPEPNVIHIMGCYILGNPNGEKLFQNLRTLMTPYKVTFESPLELSAQGKQMIETYFDFRLYRLWKSRQHSKLLDFDDVL.

Gly2 carries the N-myristoyl glycine lipid modification. The tract at residues 2 to 235 (GAAASRRRAL…FSFQTATTTM (234 aa)) is necessary and sufficient to elicit dendritic processes and synaptic contacts. Disordered regions lie at residues 34-67 (SQSH…APQN) and 127-174 (RRQR…GCAQ). Residues 38 to 48 (PENRNGADHLL) show a composition bias toward basic and acidic residues. Over residues 127–139 (RRQRERHPHHHSQ) the composition is skewed to basic residues. A compositionally biased stretch (polar residues) spans 155-164 (PCQSWAGSRQ). Phosphoserine is present on Ser206. Residues 249–252 (RRKR) carry the Nuclear localization signal motif. The disordered stretch occupies residues 275 to 315 (RVKAQTFAERRERSFSRSWSDPTPMKADTSHDSRDSSDLQS). 2 positions are modified to phosphoserine: Ser292 and Ser294. Residues 302 to 311 (DTSHDSRDSS) are compositionally biased toward basic and acidic residues.

This sequence belongs to the NSMF family. As to quaternary structure, interacts with KPNA1; the interaction occurs in a calcium-independent manner after synaptic NMDA receptor stimulation and is required for nuclear import of NSMF but is competed by CABP1. Interacts (via the central NLS-containing motif region) with CABP1 (via EF-hands 1 and 2); the interaction occurs in a calcium-dependent manner after synaptic NMDA receptor stimulation and prevents the nuclear import of NSMF. Cannot be competed by calmodulin. Post-translationally, proteolytically processed after NMDA receptor activation. Cleaved in a calcium-dependent and calpain-sensitive manner. Calpain cleavage is essential for the translocation process from dendrites to the nucleus. In terms of tissue distribution, preferentially expressed in immature migratory, in comparison to postmigrating, gonadotropin-releasing hormone (GnRH) neuronal cell lines (at protein level). Expressed in adult brain and liver. In the brain, expressed in the primary pituitary gland, cortex, hippocampus, olfactory bulb and thalamus.

Its subcellular location is the nucleus. It is found in the nucleus envelope. The protein resides in the nucleus membrane. The protein localises to the nucleus matrix. It localises to the cytoplasm. Its subcellular location is the cell cortex. It is found in the cytoskeleton. The protein resides in the cell membrane. The protein localises to the cell projection. It localises to the dendrite. Its subcellular location is the synapse. It is found in the synaptosome. The protein resides in the postsynaptic density. The protein localises to the membrane. Functionally, couples NMDA-sensitive glutamate receptor signaling to the nucleus and triggers long-lasting changes in the cytoarchitecture of dendrites and spine synapse processes. Part of the cAMP response element-binding protein (CREB) shut-off signaling pathway. Stimulates outgrowth of olfactory axons and migration of gonadotropin-releasing hormone (GnRH) and luteinizing-hormone-releasing hormone (LHRH) neuronal cells. The polypeptide is NMDA receptor synaptonuclear signaling and neuronal migration factor (Nsmf) (Mus musculus (Mouse)).